The following is a 1035-amino-acid chain: MSDIRLDSATFFKRAAKIFDSWEKPSGDTQALEDINSIAIILGDPNDEVASYTKTTALQLWLLGYEFPSTLMVFEKSPRKVTFVCGSSKAKLIRQLQPSDGIEIDVKVRSKDATAAKETMEEVVASLNGKFGSLPKDRPIGKLVDEWNSAVESKSDLEVVDVAIPISAVLAEKDGEELKTIITSAKLTSTVMINYFKSKMESIIDRGTKMSHEALAQLVEEKIGNEEKGPDMKLWNKNPSLGEIDFASSEFVYSPVIQSGGKYDLKVTAASNNDNLKPGIILANMGIRYKNYCSNMGRTFLISPSKKQETQYTTLLEVRKEALALLKTGAVASDVYNSVHQSLETKNATLADSFLKNLGFATGMEYRDSSFLLNAKNNRELKENMVLVLTIGVADLPDAKNKGKTYSLLLSDTVKIGQNGAVVLTEGCTRLSDVVMDMEEEEEEDVKPQIDKKPKINNSPKKPRSSTVGGRVLNAKTRGANREQATQTTAEKIKTNQQRLHAQLNADGVKRWEADAGGKNGAQQKVVKRYESYRREEQLPRAVEDRRIYVDEQRQSVVLPINGYAVPYHISTIKNVTKTEESNHMVLRINFQSPGQIAGKKEDMPFEDPDANFIRSVSFRSQDQRHMLKVYEAITALKKAAVKRETERKELADVIEQEKLIEVKGRHPYVLKNVFPRPGPEGKKTDGNVEIHQNGIRFRPDGPASKIDILFSNIKHLFFQPSEKELIVIIHVHLKAPIMLGKKKTSDVQFYREVADMSFDETGGKKRRARYGDEDEIEQEQEDRKRRAELDKLFHDFARRIETAAQAQQFELEVDVPFRELGFNGVPHKSIVALLPTTNCLIHISELPFTVITLSEVEIVHLERVQFGLKNFDMVFVLQDLKKPPVHINSIPVAHLDNVKEWLDSCDVPISEGPVNLSWPAIMKTVNEDPHAFYAEGGWNFLTGSGSDDGSEESEEGSEFEGDSDVFDESSGSDEDSESAFEGDSDSASAESLSDEGEDWDELERKAKRADEKHRTDRGGDSDDDGKKKKKGSRR.

A disordered region spans residues 440-471 (EEEEEDVKPQIDKKPKINNSPKKPRSSTVGGR). The stretch at 637 to 657 (LKKAAVKRETERKELADVIEQ) forms a coiled coil. The tract at residues 944–1035 (GSGSDDGSEE…GKKKKKGSRR (92 aa)) is disordered. 2 stretches are compositionally biased toward acidic residues: residues 949–985 (DGSE…EGDS) and 993–1002 (LSDEGEDWDE). Residues 1003-1027 (LERKAKRADEKHRTDRGGDSDDDGK) show a composition bias toward basic and acidic residues.

The protein belongs to the peptidase M24 family. SPT16 subfamily. Forms a stable heterodimer with POB3. The SPT16-POB3 dimer weakly associates with multiple molecules of NHP6 to form the FACT complex.

It is found in the nucleus. It localises to the chromosome. Its function is as follows. Component of the FACT complex, a general chromatin factor that acts to reorganize nucleosomes. The FACT complex is involved in multiple processes that require DNA as a template such as mRNA elongation, DNA replication and DNA repair. During transcription elongation the FACT complex acts as a histone chaperone that both destabilizes and restores nucleosomal structure. It facilitates the passage of RNA polymerase II and transcription by promoting the dissociation of one histone H2A-H2B dimer from the nucleosome, then subsequently promotes the reestablishment of the nucleosome following the passage of RNA polymerase II. This Cryptococcus neoformans var. neoformans serotype D (strain B-3501A) (Filobasidiella neoformans) protein is FACT complex subunit SPT16 (SPT16).